We begin with the raw amino-acid sequence, 344 residues long: sn-glycerol-3-phosphate import ATP-binding protein UgpC 2 (344 aa).

Residues 4-234 (IELIDLKKNY…PETVFVAGFI (231 aa)) enclose the ABC transporter domain. Residue 36–43 (GPSGCGKS) participates in ATP binding.

This sequence belongs to the ABC transporter superfamily. sn-glycerol-3-phosphate importer (TC 3.A.1.1.3) family. The complex is composed of two ATP-binding proteins (UgpC), two transmembrane proteins (UgpA and UgpE) and a solute-binding protein (UgpB).

Its subcellular location is the cell inner membrane. The catalysed reaction is sn-glycerol 3-phosphate(out) + ATP + H2O = sn-glycerol 3-phosphate(in) + ADP + phosphate + H(+). In terms of biological role, part of the ABC transporter complex UgpBAEC involved in sn-glycerol-3-phosphate (G3P) import. Responsible for energy coupling to the transport system. This Rhizobium johnstonii (strain DSM 114642 / LMG 32736 / 3841) (Rhizobium leguminosarum bv. viciae) protein is sn-glycerol-3-phosphate import ATP-binding protein UgpC 2.